We begin with the raw amino-acid sequence, 709 residues long: Putative extracellular sulfatase Sulf-1 homolog (709 aa).

Positions 1–27 are cleaved as a signal peptide; it reads MISNLRISNYFIIFYVLFLIIPIKVTS. 3 residues coordinate Ca(2+): Asp43, Asp44, and Cys79. The Nucleophile role is filled by Cys79. Cys79 is modified (3-oxoalanine (Cys)). Asn103, Asn162, and Asn189 each carry an N-linked (GlcNAc...) asparagine glycan. 2 residues coordinate Ca(2+): Asp308 and His309. Residues Asn344, Asn468, Asn500, Asn540, Asn566, Asn610, and Asn620 are each glycosylated (N-linked (GlcNAc...) asparagine).

The protein belongs to the sulfatase family. Ca(2+) is required as a cofactor. The conversion to 3-oxoalanine (also known as C-formylglycine, FGly), of a serine or cysteine residue in prokaryotes and of a cysteine residue in eukaryotes, is critical for catalytic activity.

It localises to the endoplasmic reticulum. The protein resides in the golgi apparatus. Its subcellular location is the golgi stack. It is found in the cell surface. This is Putative extracellular sulfatase Sulf-1 homolog (sul-1) from Caenorhabditis elegans.